Reading from the N-terminus, the 91-residue chain is Small ribosomal subunit protein bS18 (91 aa).

The protein belongs to the bacterial ribosomal protein bS18 family. In terms of assembly, part of the 30S ribosomal subunit. Forms a tight heterodimer with protein bS6.

Binds as a heterodimer with protein bS6 to the central domain of the 16S rRNA, where it helps stabilize the platform of the 30S subunit. The protein is Small ribosomal subunit protein bS18 of Burkholderia multivorans (strain ATCC 17616 / 249).